The primary structure comprises 140 residues: Coiled-coil domain-containing protein 126 (140 aa).

Residues 1–26 (MFFTISRKNMSQKLSLLLLVFGLIWG) form the signal peptide. Asn-110 and Asn-134 each carry an N-linked (GlcNAc...) asparagine glycan. Residues 120–140 (TSGNLVPVTTNKRTNVSGSIR) form a disordered region.

The protein resides in the secreted. The chain is Coiled-coil domain-containing protein 126 (CCDC126) from Homo sapiens (Human).